We begin with the raw amino-acid sequence, 537 residues long: Cytochrome P450 CYP12A2 (537 aa).

Cysteine 483 provides a ligand contact to heme.

This sequence belongs to the cytochrome P450 family. Heme is required as a cofactor.

This Musca domestica (House fly) protein is Cytochrome P450 CYP12A2 (CYP12A2).